Consider the following 37-residue polypeptide: Large ribosomal subunit protein bL36 (37 aa).

This sequence belongs to the bacterial ribosomal protein bL36 family.

This Syntrophomonas wolfei subsp. wolfei (strain DSM 2245B / Goettingen) protein is Large ribosomal subunit protein bL36.